Consider the following 146-residue polypeptide: Cystatin-C (146 aa).

Positions 1 to 26 (MAGPLRAPLLLLAILAVALAVSPAAG) are cleaved as a signal peptide. Ser-43 bears the Phosphoserine; by FAM20C mark. The Secondary area of contact signature appears at 81–85 (QIVAG). Cystine bridges form between Cys-99–Cys-109 and Cys-123–Cys-143.

The protein belongs to the cystatin family. Homodimer. In terms of processing, the Thr-25 variant is O-glycosylated with a core 1 or possibly core 8 glycan. The signal peptide of the O-glycosylated Thr-25 variant is cleaved between Ala-20 and Val-21. As to expression, expressed in submandibular and sublingual saliva but not in parotid saliva (at protein level). Expressed in various body fluids, such as the cerebrospinal fluid and plasma. Expressed in highest levels in the epididymis, vas deferens, brain, thymus, and ovary and the lowest in the submandibular gland.

Its subcellular location is the secreted. Its function is as follows. As an inhibitor of cysteine proteinases, this protein is thought to serve an important physiological role as a local regulator of this enzyme activity. This Homo sapiens (Human) protein is Cystatin-C (CST3).